A 297-amino-acid polypeptide reads, in one-letter code: MASSRLLDWMSRMRSVPQLERLIPALYLAHGSPFLMLPQSSDDEVFSNDSKLGGLHYQFLEQLGPFLLEKFRPKGIIVFSAHYESRGSVEVYSRDDENPLFYDYYGFPDYLYQIKFHSKGSKRIADQIISALKEYQIPAKTVSGDRGLDHGVFVPFKIMFPDGLNIPLIEVSMHTLDPMQLYKVGQALQSLRKEYLIVSGGLNIHTFEDLSAFNEDTAADGYKEFQLDILKAIETDKQNDRLNKLLGLQLHPYFRKAHPREEHFVPLYVAAGLGSSGKSKVVCDLYGAVSAFFGIDE.

4 residues coordinate Zn(2+): H30, H82, H205, and H263.

The protein belongs to the DODA-type extradiol aromatic ring-opening dioxygenase family. Zn(2+) is required as a cofactor.

The protein localises to the cytoplasm. It localises to the nucleus. In terms of biological role, may be involved in the metabolism of aromatic compounds. The chain is 4,5-DOPA dioxygenase extradiol-like protein from Schizosaccharomyces pombe (strain 972 / ATCC 24843) (Fission yeast).